A 1084-amino-acid chain; its full sequence is Autophagy-related protein 11 (1084 aa).

Coiled coils occupy residues 585 to 739 (VQNL…LTES) and 847 to 879 (VIRR…TNDK). 2 disordered regions span residues 925–961 (SMIP…NMNR) and 973–1007 (NIGS…STNA). Composition is skewed to low complexity over residues 940 to 949 (SNTNNSNPSS) and 973 to 993 (NIGS…NGNN). The span at 994-1007 (KPETNIDTTSSTNA) shows a compositional bias: polar residues.

This sequence belongs to the ATG11 family. Homodimer and potential homooligomers. Interacts with ATG1 kinase and the ATG19 and ATG34 cargo protein transporters. Interacts with ATG9, ATG17 and ATG20.

It is found in the preautophagosomal structure membrane. Its subcellular location is the vacuole membrane. Involved in cytoplasm to vacuole transport (Cvt), pexophagy, mitophagy and nucleophagy. Recruits mitochondria for their selective degradation via autophagy (mitophagy) during starvation, through its interaction with ATG32. Works as scaffold proteins that recruit ATG proteins to the pre-autophagosome (PAS), the site of vesicle/autophagosome formation. Required for ATG9 anterograde transport from the mitochondria to the PAS. Also recruits the ATG19-prAPE1 complex to the PAS. Required for the Cvt vesicles completion. The polypeptide is Autophagy-related protein 11 (Kluyveromyces marxianus (strain DMKU3-1042 / BCC 29191 / NBRC 104275) (Yeast)).